A 428-amino-acid polypeptide reads, in one-letter code: Something about silencing protein 10 (428 aa).

The disordered stretch occupies residues 1 to 93 (MDSDGDDYVM…NTMDWGSKRS (93 aa)). Acidic residues-rich tracts occupy residues 15-24 (QEYDDEEREI) and 46-62 (SDDDDDDDDDDEEEQQD). Ser-152, Ser-323, Ser-324, and Ser-337 each carry phosphoserine. The interval 317-386 (GQQASVSSDD…LRNPRVKHRG (70 aa)) is disordered. Over residues 324-336 (SDDDDNDDDDDAE) the composition is skewed to acidic residues. The span at 344–353 (EEAGEEEEEE) shows a compositional bias: acidic residues. A compositionally biased stretch (basic residues) spans 370-386 (TPHRKKELRNPRVKHRG).

Belongs to the SAS10 family.

Its subcellular location is the nucleus. Functionally, essential for gene silencing: has a role in the structure of silenced chromatin. May be involved in gene regulation during development. Binds RNA. The chain is Something about silencing protein 10 from Drosophila melanogaster (Fruit fly).